Here is a 429-residue protein sequence, read N- to C-terminus: Ribosomal RNA small subunit methyltransferase B (429 aa).

S-adenosyl-L-methionine-binding positions include 254–260, Asp-277, Asp-303, and Asp-322; that span reads CAAPGGK. Catalysis depends on Cys-375, which acts as the Nucleophile.

This sequence belongs to the class I-like SAM-binding methyltransferase superfamily. RsmB/NOP family.

Its subcellular location is the cytoplasm. The enzyme catalyses cytidine(967) in 16S rRNA + S-adenosyl-L-methionine = 5-methylcytidine(967) in 16S rRNA + S-adenosyl-L-homocysteine + H(+). In terms of biological role, specifically methylates the cytosine at position 967 (m5C967) of 16S rRNA. The sequence is that of Ribosomal RNA small subunit methyltransferase B from Escherichia fergusonii (strain ATCC 35469 / DSM 13698 / CCUG 18766 / IAM 14443 / JCM 21226 / LMG 7866 / NBRC 102419 / NCTC 12128 / CDC 0568-73).